Reading from the N-terminus, the 313-residue chain is Ribosomal RNA small subunit methyltransferase H (313 aa).

Residues 35-37 (GGH), D55, F79, D100, and Q107 contribute to the S-adenosyl-L-methionine site.

It belongs to the methyltransferase superfamily. RsmH family.

It localises to the cytoplasm. It catalyses the reaction cytidine(1402) in 16S rRNA + S-adenosyl-L-methionine = N(4)-methylcytidine(1402) in 16S rRNA + S-adenosyl-L-homocysteine + H(+). In terms of biological role, specifically methylates the N4 position of cytidine in position 1402 (C1402) of 16S rRNA. In Burkholderia ambifaria (strain MC40-6), this protein is Ribosomal RNA small subunit methyltransferase H.